A 470-amino-acid polypeptide reads, in one-letter code: Peripherin (470 aa).

The tract at residues 1–99 (MSHHPSGLRA…FLATRSNEKQ (99 aa)) is head. Tyrosine 17 is subject to 3'-nitrotyrosine. Serine 28, serine 50, and serine 59 each carry phosphoserine. The IF rod domain maps to 97–407 (EKQELQELND…KLLEGEESRI (311 aa)). The segment at 100–132 (ELQELNDRFANFIEKVRFLEQQNAALRGELSQA) is coil 1A. The tract at residues 133-143 (RGQEPARADQL) is linker 1. Positions 144-239 (CQQELRELRR…KLHEEELRDL (96 aa)) are coil 1B. Positions 240–262 (QVSVESQQVQQVEVEATVKPELT) are linker 2. The interval 263 to 405 (AALRDIRAQY…YRKLLEGEES (143 aa)) is coil 2. 3'-nitrotyrosine is present on tyrosine 379. Positions 406 to 470 (RISVPVHSFA…ELDKSSAHSY (65 aa)) are tail. Positions 447 to 470 (NGEVVTESQKEQRSELDKSSAHSY) are disordered. Positions 454–470 (SQKEQRSELDKSSAHSY) are enriched in basic and acidic residues. Tyrosine 470 carries the phosphotyrosine modification.

Belongs to the intermediate filament family. Forms homodimers (in vitro). Homopolymerizes into a filamentous network (in vitro). Forms heterodimers with NEFL, NEFM or NEFH (in vitro). Interacts with DST (via C-terminus). Interacts with RAB7A; the interaction is direct. Interacts with PRKCE (via phorbol-ester/DAG-type 2 domain). In terms of processing, phosphorylated; phosphorylation increases after nerve injury in regenerating neurons. As to expression, expressed in the neurons of the outer hair cells in the organ of Corti and to a lesser extent in type I spiral ganglion cells.

It is found in the cytoplasm. It localises to the cytoskeleton. The protein resides in the cell projection. The protein localises to the axon. Its subcellular location is the perikaryon. Its function is as follows. Class-III neuronal intermediate filament protein. May form an independent structural network without the involvement of other neurofilaments or may cooperate with the neuronal intermediate filament proteins NEFL, NEFH, NEFM and INA to form a filamentous network. Assembly of the neuronal intermediate filaments may be regulated by RAB7A. Plays a role in the development of unmyelinated sensory neurons. May be involved in axon elongation and axon regeneration after injury. Inhibits neurite extension in type II spiral ganglion neurons in the cochlea. The protein is Peripherin (PRPH) of Homo sapiens (Human).